The sequence spans 520 residues: NAD(P)H-quinone oxidoreductase subunit 2 (520 aa).

The next 14 helical transmembrane spans lie at 15–35 (ILPE…DLIL), 42–62 (WIGY…YFQW), 79–99 (LSII…LMSI), 106–126 (GTAL…GMFV), 132–152 (LVMI…LTGY), 167–187 (LLIG…LYGL), 210–230 (LGAV…ISAA), 244–264 (PTPV…ALAI), 280–300 (FVFT…ALAQ), 306–326 (MLAY…IAGT), 334–354 (IFYL…IILF), 378–398 (LGLS…GFFG), 400–420 (IYLF…LGLV), and 466–486 (VGLV…NPLF).

The protein belongs to the complex I subunit 2 family. As to quaternary structure, NDH-1 can be composed of about 15 different subunits; different subcomplexes with different compositions have been identified which probably have different functions.

The protein localises to the cellular thylakoid membrane. The catalysed reaction is a plastoquinone + NADH + (n+1) H(+)(in) = a plastoquinol + NAD(+) + n H(+)(out). The enzyme catalyses a plastoquinone + NADPH + (n+1) H(+)(in) = a plastoquinol + NADP(+) + n H(+)(out). Its function is as follows. NDH-1 shuttles electrons from an unknown electron donor, via FMN and iron-sulfur (Fe-S) centers, to quinones in the respiratory and/or the photosynthetic chain. The immediate electron acceptor for the enzyme in this species is believed to be plastoquinone. Couples the redox reaction to proton translocation, and thus conserves the redox energy in a proton gradient. Cyanobacterial NDH-1 also plays a role in inorganic carbon-concentration. This chain is NAD(P)H-quinone oxidoreductase subunit 2, found in Trichormus variabilis (strain ATCC 29413 / PCC 7937) (Anabaena variabilis).